Here is a 258-residue protein sequence, read N- to C-terminus: 5-oxoprolinase subunit A (258 aa).

Belongs to the LamB/PxpA family. In terms of assembly, forms a complex composed of PxpA, PxpB and PxpC.

The catalysed reaction is 5-oxo-L-proline + ATP + 2 H2O = L-glutamate + ADP + phosphate + H(+). In terms of biological role, catalyzes the cleavage of 5-oxoproline to form L-glutamate coupled to the hydrolysis of ATP to ADP and inorganic phosphate. This Corynebacterium jeikeium (strain K411) protein is 5-oxoprolinase subunit A.